Consider the following 785-residue polypeptide: MEKKVEAILEFDKIKKQLTEFASSSLGEQAILELAPATDFQVVQKTQLETEEGAKIIRLRGSAPITGLTDVFAHLKRLEIGGDLNGLEIYQIGSNLRVSRQMKNFMNDLLEIGVELPLLGALSDELLVLKEVEEDIAISVDESGKVLDTASEALSTIRRTLRRTEDRVREKLESYLRDRNASKMLSDAVITIRNDRYVIPVKQEYKGHYGGIVHDQSASGQTLFIEPQSVVDLNNERKALQAKEKQEIERILAEISASLAAWINEIHHNTFILGRFDFIFAKARFGKAMKAVTPHLSDAGVVHLIAARHPLLDAAKVVANDIYLGEDFTTIVITGPNTGGKTITLKTLGLLTLMAQSGLQIPAQEDSTIAVFEHVFADIGDEQSIEQSLSTFSSHMTNIVSILGNVNQKSLILYDELGAGTDPQEGAALAIAILDASHAKGASVVATTHYPELKAYGYNRVHATNASVEFNVETLSPTYKLLIGVPGRSNAFDISRRLGLSENIITEARSLVDTESADLNDMISSLEEKRNLAETEYEEARELARGAGNLLKDLQKEISNYYQQKDKLIEQASEKAATIVEKAEAEAEEIIHELRTMQLNGAAGIKEHELIDAKTRLGNAKPKTINKTIPQAPKQKPHVFQEGDNVRVLSLGQKGTLLNKISDKEWNVQIGIIKMKIKTVDLEYIQPEKPKKQRIITSVHSSGSPAKSELDLRGERYEDALQKVDKYLDEALLAGYPQVAIIHGKGTGALRTGVTEYLKNHRMVKSIRFGAAAEGGNGVTIVEFK.

Position 335–342 (335–342) interacts with ATP; that stretch reads GPNTGGKT. The region spanning 710-785 is the Smr domain; the sequence is LDLRGERYED…GNGVTIVEFK (76 aa).

This sequence belongs to the DNA mismatch repair MutS family. MutS2 subfamily. In terms of assembly, homodimer. Binds to stalled ribosomes, contacting rRNA.

Its function is as follows. Endonuclease that is involved in the suppression of homologous recombination and thus may have a key role in the control of bacterial genetic diversity. Acts as a ribosome collision sensor, splitting the ribosome into its 2 subunits. Detects stalled/collided 70S ribosomes which it binds and splits by an ATP-hydrolysis driven conformational change. Acts upstream of the ribosome quality control system (RQC), a ribosome-associated complex that mediates the extraction of incompletely synthesized nascent chains from stalled ribosomes and their subsequent degradation. Probably generates substrates for RQC. This is Endonuclease MutS2 from Listeria monocytogenes serotype 4b (strain F2365).